Consider the following 284-residue polypeptide: MKLDGYTRLAAVVANPIKHSISPFIHNRAFEATATNGAYVAWEIEASDLVETVANIRRYQMFGINLSMPYKEQVIPYLDKLSDEARLIGAVNTVVNENGNLIGYNTDGKGFFKCLPSFTISGKKMILLGAGGAAKSILAQAILDGVSQISVFVRSVSMEKTRPYLDKLQEQTGFKVDLCALEYVSELQARIAESDLLVNATSVGMDGQFSPVPENIVLPETLLVADIIYQPFETPFLKWARSQGNPAVNGLGMLLYQAAEAFQLWTGKEMPTEEIWQSLTEKYQ.

Residues 20–22 (SIS) and Ser-67 contribute to the shikimate site. The active-site Proton acceptor is the Lys-71. Asp-83 is a binding site for NADP(+). 2 residues coordinate shikimate: Asn-92 and Asp-107. NADP(+)-binding positions include 129–133 (GAGGA) and Ile-227. Residue Tyr-229 participates in shikimate binding. Gly-250 lines the NADP(+) pocket.

The protein belongs to the shikimate dehydrogenase family. In terms of assembly, homodimer.

The enzyme catalyses shikimate + NADP(+) = 3-dehydroshikimate + NADPH + H(+). The protein operates within metabolic intermediate biosynthesis; chorismate biosynthesis; chorismate from D-erythrose 4-phosphate and phosphoenolpyruvate: step 4/7. Functionally, involved in the biosynthesis of the chorismate, which leads to the biosynthesis of aromatic amino acids. Catalyzes the reversible NADPH linked reduction of 3-dehydroshikimate (DHSA) to yield shikimate (SA). The chain is Shikimate dehydrogenase (NADP(+)) from Streptococcus pneumoniae (strain 70585).